The chain runs to 175 residues: Adenine phosphoribosyltransferase (175 aa).

The protein belongs to the purine/pyrimidine phosphoribosyltransferase family. Homodimer.

The protein localises to the cytoplasm. The enzyme catalyses AMP + diphosphate = 5-phospho-alpha-D-ribose 1-diphosphate + adenine. It participates in purine metabolism; AMP biosynthesis via salvage pathway; AMP from adenine: step 1/1. Catalyzes a salvage reaction resulting in the formation of AMP, that is energically less costly than de novo synthesis. The polypeptide is Adenine phosphoribosyltransferase (Nitrosospira multiformis (strain ATCC 25196 / NCIMB 11849 / C 71)).